The chain runs to 433 residues: Chaperone SurA (433 aa).

The signal sequence occupies residues 1–24; that stretch reads MDGIKLLLSIIILYFYTYINCAIA. PpiC domains follow at residues 173–274 and 285–385; these read NTTF…KVHD and ITEV…QLQN.

It is found in the periplasm. The catalysed reaction is [protein]-peptidylproline (omega=180) = [protein]-peptidylproline (omega=0). Functionally, chaperone involved in the correct folding and assembly of outer membrane proteins. Recognizes specific patterns of aromatic residues and the orientation of their side chains, which are found more frequently in integral outer membrane proteins. May act in both early periplasmic and late outer membrane-associated steps of protein maturation. This chain is Chaperone SurA, found in Baumannia cicadellinicola subsp. Homalodisca coagulata.